We begin with the raw amino-acid sequence, 224 residues long: Urease accessory protein UreF (224 aa).

The protein belongs to the UreF family. As to quaternary structure, ureD, UreF and UreG form a complex that acts as a GTP-hydrolysis-dependent molecular chaperone, activating the urease apoprotein by helping to assemble the nickel containing metallocenter of UreC. The UreE protein probably delivers the nickel.

It localises to the cytoplasm. In terms of biological role, required for maturation of urease via the functional incorporation of the urease nickel metallocenter. The chain is Urease accessory protein UreF from Pseudomonas putida (strain W619).